The primary structure comprises 401 residues: Argininosuccinate synthase (401 aa).

Residue 8-16 (AYSGGLDTS) participates in ATP binding. Tyr87 contacts L-citrulline. Gly117 is an ATP binding site. The L-aspartate site is built by Thr119, Asn123, and Asp124. An L-citrulline-binding site is contributed by Asn123. Positions 127, 175, 259, and 271 each coordinate L-citrulline.

The protein belongs to the argininosuccinate synthase family. Type 1 subfamily. In terms of assembly, homotetramer.

The protein localises to the cytoplasm. The enzyme catalyses L-citrulline + L-aspartate + ATP = 2-(N(omega)-L-arginino)succinate + AMP + diphosphate + H(+). It functions in the pathway amino-acid biosynthesis; L-arginine biosynthesis; L-arginine from L-ornithine and carbamoyl phosphate: step 2/3. This Corynebacterium efficiens (strain DSM 44549 / YS-314 / AJ 12310 / JCM 11189 / NBRC 100395) protein is Argininosuccinate synthase.